Here is a 181-residue protein sequence, read N- to C-terminus: Oligoribonuclease (181 aa).

An Exonuclease domain is found at Leu8–Leu171. Tyr129 is an active-site residue.

Belongs to the oligoribonuclease family.

The protein resides in the cytoplasm. 3'-to-5' exoribonuclease specific for small oligoribonucleotides. This chain is Oligoribonuclease, found in Shewanella amazonensis (strain ATCC BAA-1098 / SB2B).